We begin with the raw amino-acid sequence, 292 residues long: MSLVSAALFGLLQALTEFLPVSSTAHLLVFGELLGHSLDDRRFRAFVTIIQAGTTLAVLVYFRADIARLVAASARGLARGRPFGTPEARLGWYIVLGTLPAALAGKLLEHRIEALGNWVIAGSLVALGLVLLAAERLASHRRRVEDVGAGDALLIGVAQALALVPGSSRSGTTITGGMLLGFTREAAARFSFLLSVPITLAAGAYKLWSTVPDLRGEAAWTVATVVGTVVSAVAGYLVIDWLLAWLRTRTTYVFVVWRLAAGAAIAALILSGVLPAGAEAPPPPPPALHAAP.

The next 7 membrane-spanning stretches (helical) occupy residues 1–21 (MSLV…FLPV), 46–66 (FVTI…RADI), 90–110 (LGWY…LLEH), 114–134 (ALGN…LLAA), 192–212 (FLLS…STVP), 225–245 (VVGT…LLAW), and 253–273 (VFVV…LSGV).

It belongs to the UppP family.

It localises to the cell inner membrane. It carries out the reaction di-trans,octa-cis-undecaprenyl diphosphate + H2O = di-trans,octa-cis-undecaprenyl phosphate + phosphate + H(+). Functionally, catalyzes the dephosphorylation of undecaprenyl diphosphate (UPP). Confers resistance to bacitracin. The chain is Undecaprenyl-diphosphatase from Anaeromyxobacter sp. (strain K).